A 258-amino-acid chain; its full sequence is UPF0328 protein ECU02_0090 (258 aa).

It belongs to the UPF0328 family.

The protein is UPF0328 protein ECU02_0090 of Encephalitozoon cuniculi (strain GB-M1) (Microsporidian parasite).